Consider the following 322-residue polypeptide: ATP-dependent 6-phosphofructokinase (322 aa).

Residue Gly11 coordinates ATP. An ADP-binding site is contributed by 21 to 25; it reads RAVAR. ATP-binding positions include 72–73 and 102–105; these read RY and GDGS. Position 103 (Asp103) interacts with Mg(2+). 125 to 127 lines the substrate pocket; that stretch reads TID. Catalysis depends on Asp127, which acts as the Proton acceptor. Position 154 (Arg154) interacts with ADP. Residues Arg162 and 169 to 171 contribute to the substrate site; that span reads MGR. Residues 185–187 and 213–215 contribute to the ADP site; these read GAD and KDY. Substrate contacts are provided by residues Glu222, Arg246, and 252–255; that span reads HVQR.

This sequence belongs to the phosphofructokinase type A (PFKA) family. ATP-dependent PFK group I subfamily. Prokaryotic clade 'B1' sub-subfamily. In terms of assembly, homotetramer. It depends on Mg(2+) as a cofactor.

The protein localises to the cytoplasm. The enzyme catalyses beta-D-fructose 6-phosphate + ATP = beta-D-fructose 1,6-bisphosphate + ADP + H(+). Its pathway is carbohydrate degradation; glycolysis; D-glyceraldehyde 3-phosphate and glycerone phosphate from D-glucose: step 3/4. With respect to regulation, allosterically activated by ADP and other diphosphonucleosides, and allosterically inhibited by phosphoenolpyruvate. Functionally, catalyzes the phosphorylation of D-fructose 6-phosphate to fructose 1,6-bisphosphate by ATP, the first committing step of glycolysis. The polypeptide is ATP-dependent 6-phosphofructokinase (Pediococcus pentosaceus (strain ATCC 25745 / CCUG 21536 / LMG 10740 / 183-1w)).